The chain runs to 172 residues: Melanocortin-2 receptor accessory protein (172 aa).

The helical transmembrane segment at 38 to 58 (IVIAFWVSLAAFVVLLFLILL) threads the bilayer. 2 disordered regions span residues 105-136 (QAQASSVEPGSRTGPDQPLRQESSSTLPLGGF) and 151-172 (GPLVRSKPSEPPPGDRTSQLQS).

Belongs to the MRAP family. In terms of assembly, homodimer and heterodimer. Forms antiparallel homodimers and heterodimers with MRAP2. Interacts with MC1R, MC2R, MC3R, MC4R and MC5R. As to expression, expressed in adrenal cortex, testis, breast, thyroid, lymph node, ovary and fat. Expressed in adipose tissues.

Its subcellular location is the cell membrane. It localises to the endoplasmic reticulum membrane. In terms of biological role, modulator of melanocortin receptors (MC1R, MC2R, MC3R, MC4R and MC5R). Acts by increasing ligand-sensitivity of melanocortin receptors and enhancing generation of cAMP by the receptors. Required both for MC2R trafficking to the cell surface of adrenal cells and for signaling in response to corticotropin (ACTH). May be involved in the intracellular trafficking pathways in adipocyte cells. This chain is Melanocortin-2 receptor accessory protein (MRAP), found in Homo sapiens (Human).